The chain runs to 262 residues: Methylthioribulose-1-phosphate dehydratase (262 aa).

Cys-115 lines the substrate pocket. Zn(2+) is bound by residues His-133 and His-135. The active-site Proton donor/acceptor is the Glu-158. Position 223 (His-223) interacts with Zn(2+).

This sequence belongs to the aldolase class II family. MtnB subfamily. It depends on Zn(2+) as a cofactor.

It is found in the cytoplasm. The enzyme catalyses 5-(methylsulfanyl)-D-ribulose 1-phosphate = 5-methylsulfanyl-2,3-dioxopentyl phosphate + H2O. The protein operates within amino-acid biosynthesis; L-methionine biosynthesis via salvage pathway; L-methionine from S-methyl-5-thio-alpha-D-ribose 1-phosphate: step 2/6. Its function is as follows. Catalyzes the dehydration of methylthioribulose-1-phosphate (MTRu-1-P) into 2,3-diketo-5-methylthiopentyl-1-phosphate (DK-MTP-1-P). The chain is Methylthioribulose-1-phosphate dehydratase from Meyerozyma guilliermondii (strain ATCC 6260 / CBS 566 / DSM 6381 / JCM 1539 / NBRC 10279 / NRRL Y-324) (Yeast).